The sequence spans 163 residues: MASTYSFDIVSDFDRQELVNAVDQARREIKQRYDLKDTQTEIELEEGSLTITTANDMALNSIRDLLLTKAAKRGLSLKIFDFQPPESAGGNRVRQVVHLKKGIDATLAKQIAKQIRDNFKKVQPAIQGDLVRVSGKDKDELQAVIQMLRQQDYPVALQFVNYR.

This sequence belongs to the YajQ family.

Its function is as follows. Nucleotide-binding protein. The sequence is that of Nucleotide-binding protein CYB_0891 from Synechococcus sp. (strain JA-2-3B'a(2-13)) (Cyanobacteria bacterium Yellowstone B-Prime).